Reading from the N-terminus, the 369-residue chain is WAT1-related protein At3g53210 (369 aa).

The next 10 membrane-spanning stretches (helical) occupy residues 12-31 (IAMV…MRYA), 39-59 (LVFP…SAYF), 72-92 (FLIQ…GFYI), 103-123 (ASAT…LLGI), 133-153 (GIAK…ITLY), 182-202 (WTLG…WIVL), 214-234 (FSFV…ISAY), 252-272 (ALLY…IYVV), 278-298 (LFVS…ATLA), and 303-323 (FYLG…LVVM). 2 EamA domains span residues 24-150 (NHVI…SLVI) and 194-323 (LCWS…LVVM). The segment at 348–369 (GDEEDYHNNKPRSPISQPLISS) is disordered.

Belongs to the drug/metabolite transporter (DMT) superfamily. Plant drug/metabolite exporter (P-DME) (TC 2.A.7.4) family.

Its subcellular location is the membrane. The chain is WAT1-related protein At3g53210 from Arabidopsis thaliana (Mouse-ear cress).